The following is a 389-amino-acid chain: Elongation factor Tu-3 (389 aa).

The 194-residue stretch at 10 to 203 folds into the tr-type G domain; it reads KPHLNIGTMG…AVDTYVPMPE (194 aa). The tract at residues 19–26 is G1; sequence GHVDHGKT. Residue 19 to 26 participates in GTP binding; sequence GHVDHGKT. Threonine 26 lines the Mg(2+) pocket. A G2 region spans residues 60–64; sequence GITIN. The segment at 81 to 84 is G3; it reads DMPG. GTP-binding positions include 81-85 and 136-139; these read DMPGH and NKAD. A G4 region spans residues 136 to 139; it reads NKAD. The interval 173–175 is G5; the sequence is SGL.

This sequence belongs to the TRAFAC class translation factor GTPase superfamily. Classic translation factor GTPase family. EF-Tu/EF-1A subfamily. As to quaternary structure, monomer.

It is found in the cytoplasm. The catalysed reaction is GTP + H2O = GDP + phosphate + H(+). GTP hydrolase that promotes the GTP-dependent binding of aminoacyl-tRNA to the A-site of ribosomes during protein biosynthesis. This is Elongation factor Tu-3 from Streptomyces ramocissimus.